The following is a 207-amino-acid chain: Dephospho-CoA kinase (207 aa).

In terms of domain architecture, DPCK spans 4 to 203 (VIGLTGGIAS…EEGYIEKPNY (200 aa)). 12 to 17 (ASGKST) is an ATP binding site.

Belongs to the CoaE family.

The protein localises to the cytoplasm. The catalysed reaction is 3'-dephospho-CoA + ATP = ADP + CoA + H(+). It functions in the pathway cofactor biosynthesis; coenzyme A biosynthesis; CoA from (R)-pantothenate: step 5/5. Functionally, catalyzes the phosphorylation of the 3'-hydroxyl group of dephosphocoenzyme A to form coenzyme A. The protein is Dephospho-CoA kinase of Staphylococcus aureus (strain bovine RF122 / ET3-1).